We begin with the raw amino-acid sequence, 521 residues long: Bifunctional purine biosynthesis protein PurH (521 aa).

The 145-residue stretch at 1 to 145 folds into the MGS-like domain; that stretch reads MIKQALISVS…KNHRDVTVVV (145 aa).

This sequence belongs to the PurH family.

The catalysed reaction is (6R)-10-formyltetrahydrofolate + 5-amino-1-(5-phospho-beta-D-ribosyl)imidazole-4-carboxamide = 5-formamido-1-(5-phospho-D-ribosyl)imidazole-4-carboxamide + (6S)-5,6,7,8-tetrahydrofolate. It carries out the reaction IMP + H2O = 5-formamido-1-(5-phospho-D-ribosyl)imidazole-4-carboxamide. It functions in the pathway purine metabolism; IMP biosynthesis via de novo pathway; 5-formamido-1-(5-phospho-D-ribosyl)imidazole-4-carboxamide from 5-amino-1-(5-phospho-D-ribosyl)imidazole-4-carboxamide (10-formyl THF route): step 1/1. It participates in purine metabolism; IMP biosynthesis via de novo pathway; IMP from 5-formamido-1-(5-phospho-D-ribosyl)imidazole-4-carboxamide: step 1/1. This Burkholderia orbicola (strain MC0-3) protein is Bifunctional purine biosynthesis protein PurH.